We begin with the raw amino-acid sequence, 75 residues long: UPF0291 protein LMOf2365_1322 (75 aa).

Positions 56-75 (DPNGTDVTPHKVKQLRKNKH) are disordered. Residues 65 to 75 (HKVKQLRKNKH) show a composition bias toward basic residues.

This sequence belongs to the UPF0291 family.

The protein localises to the cytoplasm. This Listeria monocytogenes serotype 4b (strain F2365) protein is UPF0291 protein LMOf2365_1322.